A 214-amino-acid chain; its full sequence is Ceramide-1-phosphate transfer protein (214 aa).

Residues aspartate 56, lysine 60, arginine 106, arginine 110, and histidine 150 each contribute to the an N-acylsphingoid base 1-phosphate site.

The protein belongs to the GLTP family. Ubiquitous. Detected in heart, brain, placenta, lung, liver, skeletal muscle, kidney, pancreas, spleen, thymus, prostate, testis, ovary, small intestine, colon and peripheral blood leukocytes.

The protein resides in the cytoplasm. The protein localises to the cytosol. It localises to the golgi apparatus. Its subcellular location is the trans-Golgi network membrane. It is found in the cell membrane. The protein resides in the endosome membrane. The protein localises to the nucleus outer membrane. The enzyme catalyses N-(hexadecanoyl)-sphing-4-enine-1-phosphate(in) = N-(hexadecanoyl)-sphing-4-enine-1-phosphate(out). It catalyses the reaction N-(9Z-octadecenoyl)-sphing-4-enine-1-phosphate(in) = N-(9Z-octadecenoyl)-sphing-4-enine-1-phosphate(out). In terms of biological role, mediates the intracellular transfer of ceramide-1-phosphate (C1P) between organelle membranes and the cell membrane. Required for normal structure of the Golgi stacks. Can bind phosphoceramides with a variety of aliphatic chains, but has a preference for lipids with saturated C16:0 or monounsaturated C18:1 aliphatic chains, and is inefficient with phosphoceramides containing lignoceryl (C24:0). Plays a role in the regulation of the cellular levels of ceramide-1-phosphate, and thereby contributes to the regulation of phospholipase PLA2G4A activity and the release of arachidonic acid. Has no activity with galactosylceramide, lactosylceramide, sphingomyelin, phosphatidylcholine, phosphatidic acid and ceramide. C1P transfer is stimulated by phosphatidylserine in C1P source vesicles. Regulates autophagy, inflammasome mediated IL1B and IL18 processing, and pyroptosis, but not apoptosis. The chain is Ceramide-1-phosphate transfer protein from Homo sapiens (Human).